Consider the following 689-residue polypeptide: Quinidine resistance protein 3 (689 aa).

Residues 1 to 24 (MQAQGSQSNVGSLRSNCSDNSLPN) are compositionally biased toward polar residues. Residues 1–73 (MQAQGSQSNV…DNQLSRLKSE (73 aa)) form a disordered region. Over 1–108 (MQAQGSQSNV…RDYPPMMKKM (108 aa)) the chain is Extracellular. Composition is skewed to basic and acidic residues over residues 29–51 (MHCD…EKTN) and 59–73 (SREH…LKSE). The chain crosses the membrane as a helical span at residues 109 to 131 (IVFLIAFSSMMGPMGTSIIFPAI). Residues 132–139 (NSITTEFK) are Cytoplasmic-facing. The chain crosses the membrane as a helical span at residues 140–163 (TSVIMVNVSIGVYLLSLGVFPLWW). The Extracellular portion of the chain corresponds to 164–175 (SSLSELEGRRTT). A helical transmembrane segment spans residues 176-193 (YITSFALLFAFNIGSALA). Over 194 to 235 (PDINSFIALRMLCGAASASVQSVGAGTVADLYISEDRGKNLS) the chain is Cytoplasmic. Residues 236–256 (YYYLGPLLAPLLSPIFGSLLV) traverse the membrane as a helical segment. The Extracellular segment spans residues 257-265 (NRWPWRSTQ). The helical transmembrane segment at 266–283 (WFMVILSGCNVILLTVLL) threads the bilayer. The Cytoplasmic portion of the chain corresponds to 284-475 (PETLRKQDSK…KSLHFLEYPP (192 aa)). The residue at position 436 (S436) is a Phosphoserine. A helical membrane pass occupies residues 476 to 493 (VALAITFSAISFSTVYFV). The Extracellular portion of the chain corresponds to 494–510 (NMTVEYKYSRPPYNFKP). A helical transmembrane segment spans residues 511 to 532 (LYIGLLYIPNSVTYFFASIYGG). Topologically, residues 533–558 (RWVDMLLKRYKEKYGILAPEARISWN) are cytoplasmic. The chain crosses the membrane as a helical span at residues 559-577 (VVTSVISFPIALLIFGWCL). Residues 578–586 (DKKCHWVTP) lie on the Extracellular side of the membrane. A helical transmembrane segment spans residues 587–609 (LIGTALFGYAAMMTIGATLSYLV). At 610 to 624 (DSLPGKGATGVALNN) the chain is on the cytoplasmic side. Residues 625–642 (LIRQILAATAVFVTTPML) traverse the membrane as a helical segment. Over 643-648 (NGMGTG) the chain is Extracellular. Residues 649–668 (WAFTMLAFIVLGASSVLIIL) form a helical membrane-spanning segment. Residues 669-689 (KKHGDYWRENYDLQKLYDKID) are Cytoplasmic-facing.

This sequence belongs to the major facilitator superfamily. CAR1 family.

The protein localises to the cell membrane. Its function is as follows. Multidrug resistance transporter involved in resistance and adaptation to quinidine and to the herbicide barban (4-chloro-2-butynyl [3-chlorophenyl] carbamate). The protein is Quinidine resistance protein 3 (QDR3) of Saccharomyces cerevisiae (strain ATCC 204508 / S288c) (Baker's yeast).